A 461-amino-acid polypeptide reads, in one-letter code: Elongation factor 1-alpha, oocyte form (461 aa).

N,N,N-trimethylglycine is present on Gly-2. In terms of domain architecture, tr-type G spans Lys-5 to Thr-242. The tract at residues Gly-14–Ser-21 is G1. Gly-14 to Ser-21 serves as a coordination point for GTP. Residues Gly-70 to Asp-74 form a G2 region. Residues Asp-91–Gly-94 are G3. Residues Asp-91–His-95 and Asn-153–Asp-156 contribute to the GTP site. Residues Asn-153–Asp-156 form a G4 region. The segment at Ser-194–Trp-196 is G5. Glu-301 and Glu-374 each carry 5-glutamyl glycerylphosphorylethanolamine.

This sequence belongs to the TRAFAC class translation factor GTPase superfamily. Classic translation factor GTPase family. EF-Tu/EF-1A subfamily. In terms of tissue distribution, oocyte.

It is found in the cytoplasm. In terms of biological role, this protein promotes the GTP-dependent binding of aminoacyl-tRNA to the A-site of ribosomes during protein biosynthesis. This is Elongation factor 1-alpha, oocyte form (eef1ao) from Xenopus laevis (African clawed frog).